The primary structure comprises 468 residues: Replication factor C large subunit (468 aa).

Residue 50–57 (GPPGSGKT) participates in ATP binding. The tract at residues 422–456 (EEKAVEEKVEEEEAEEEEEEERKEEEKPKAEKKKG) is disordered. Residues 429–444 (KVEEEEAEEEEEEERK) show a composition bias toward acidic residues.

The protein belongs to the activator 1 small subunits family. RfcL subfamily. As to quaternary structure, heteromultimer composed of small subunits (RfcS) and large subunits (RfcL).

Part of the RFC clamp loader complex which loads the PCNA sliding clamp onto DNA. The polypeptide is Replication factor C large subunit (Pyrococcus horikoshii (strain ATCC 700860 / DSM 12428 / JCM 9974 / NBRC 100139 / OT-3)).